Here is a 187-residue protein sequence, read N- to C-terminus: MNDSLIRIKQNFIEYILFNYRFKSRITVWVLNYLKANQDKLNNVHFVNSKINNHYTLEIAEVDATASAIQLSKDNKSYINTNQIFNYIANHTLRLDIQIHFANCHIRESRLDDLILMQLIHSPSYSSYVQDLYSISMDKRKQTFIIQTLQNNIDLSLQMNEPDYFYQLTQILNVLKSKDIQSTLHER.

Belongs to the UPF0302 family.

The polypeptide is UPF0302 protein SERP1032 (Staphylococcus epidermidis (strain ATCC 35984 / DSM 28319 / BCRC 17069 / CCUG 31568 / BM 3577 / RP62A)).